Consider the following 182-residue polypeptide: Large ribosomal subunit protein uL5 (182 aa).

The protein belongs to the universal ribosomal protein uL5 family. In terms of assembly, part of the 50S ribosomal subunit; part of the 5S rRNA/L5/L18/L25 subcomplex. Contacts the 5S rRNA and the P site tRNA. Forms a bridge to the 30S subunit in the 70S ribosome.

This is one of the proteins that bind and probably mediate the attachment of the 5S RNA into the large ribosomal subunit, where it forms part of the central protuberance. In the 70S ribosome it contacts protein S13 of the 30S subunit (bridge B1b), connecting the 2 subunits; this bridge is implicated in subunit movement. Contacts the P site tRNA; the 5S rRNA and some of its associated proteins might help stabilize positioning of ribosome-bound tRNAs. The protein is Large ribosomal subunit protein uL5 of Borreliella burgdorferi (strain ATCC 35210 / DSM 4680 / CIP 102532 / B31) (Borrelia burgdorferi).